Consider the following 432-residue polypeptide: MVNTTIKTTKSQEIFAAAQNLMPGGVSSPVRAFKSVGGQPIVFDHVKGAYIWDVDGNQYIDYVGTWGPAICGHAHPDVIGALHEALEKGTSFGAPSFLENVLAEMVIAAVPSIEMVRFVNSGTEACMAVLRLMRAFTNREKVIKFEGCYHGHADMFLVKAGSGVATLGLPDSPGVPKSATSSTLTAPYNDLEAVKALFAENRDQIAGVILEPVVGNAGFITPDAGFLEGLRELTHEHGALLVFDEVMTGFRIAYGGAQEKFGVTPDLTTLGKVIGGGLPVGAYGGRRDIMSMIAPAGPVYQAGTLSGNPLAMTAGIKTLELLQKPGAYEYLERITKKLADGLLQVAQETGHAACGGHISAMFGLFFTSGPVHNYEDAKNSDTAKFGRFHRGMLERGVYLAPSQFEAGFTSLAHTDEDIDQTIAIAREVLSSI.

Lys272 is modified (N6-(pyridoxal phosphate)lysine).

Belongs to the class-III pyridoxal-phosphate-dependent aminotransferase family. HemL subfamily. As to quaternary structure, homodimer. It depends on pyridoxal 5'-phosphate as a cofactor.

The protein resides in the cytoplasm. The catalysed reaction is (S)-4-amino-5-oxopentanoate = 5-aminolevulinate. Its pathway is porphyrin-containing compound metabolism; protoporphyrin-IX biosynthesis; 5-aminolevulinate from L-glutamyl-tRNA(Glu): step 2/2. It functions in the pathway porphyrin-containing compound metabolism; chlorophyll biosynthesis. This Trichormus variabilis (strain ATCC 29413 / PCC 7937) (Anabaena variabilis) protein is Glutamate-1-semialdehyde 2,1-aminomutase.